Consider the following 547-residue polypeptide: CTP synthase (547 aa).

The tract at residues 1–265 (MTRYVFITGG…DEIVLRKLHI (265 aa)) is amidoligase domain. Position 13 (S13) interacts with CTP. UTP is bound at residue S13. Residues 14–19 (SLGKGI) and D71 each bind ATP. D71 and E139 together coordinate Mg(2+). Residues 146–148 (DIE), 186–191 (KTKPTQ), and K222 contribute to the CTP site. UTP contacts are provided by residues 186–191 (KTKPTQ) and K222. Residues 290 to 541 (TVGMVGKYVD…IRAARAQHEK (252 aa)) enclose the Glutamine amidotransferase type-1 domain. G351 contacts L-glutamine. C378 acts as the Nucleophile; for glutamine hydrolysis in catalysis. Residues 379–382 (LGMQ), E402, and R469 contribute to the L-glutamine site. Active-site residues include H514 and E516.

It belongs to the CTP synthase family. In terms of assembly, homotetramer.

The enzyme catalyses UTP + L-glutamine + ATP + H2O = CTP + L-glutamate + ADP + phosphate + 2 H(+). It carries out the reaction L-glutamine + H2O = L-glutamate + NH4(+). The catalysed reaction is UTP + NH4(+) + ATP = CTP + ADP + phosphate + 2 H(+). It participates in pyrimidine metabolism; CTP biosynthesis via de novo pathway; CTP from UDP: step 2/2. Its activity is regulated as follows. Allosterically activated by GTP, when glutamine is the substrate; GTP has no effect on the reaction when ammonia is the substrate. The allosteric effector GTP functions by stabilizing the protein conformation that binds the tetrahedral intermediate(s) formed during glutamine hydrolysis. Inhibited by the product CTP, via allosteric rather than competitive inhibition. Catalyzes the ATP-dependent amination of UTP to CTP with either L-glutamine or ammonia as the source of nitrogen. Regulates intracellular CTP levels through interactions with the four ribonucleotide triphosphates. This chain is CTP synthase, found in Thioalkalivibrio sulfidiphilus (strain HL-EbGR7).